The primary structure comprises 585 residues: SCF E3 ubiquitin ligase complex F-box protein grrA (585 aa).

Positions Met1–Phe10 are enriched in polar residues. 2 disordered regions span residues Met1 to Phe34 and Asp41 to Pro60. Residues Ser11–Glu25 show a composition bias toward low complexity. The region spanning Pro65–Asn113 is the F-box domain. 13 LRR repeats span residues Thr147–Asn171, Cys172–Glu197, Leu198–Gly223, Cys224–Gly249, Val250–Glu275, Cys276–His301, Cys302–Ala329, Cys330–Lys355, Cys356–His381, Cys382–Cys407, Cys408–Lys432, Cys433–Tyr465, and Cys466–Gly491.

As to quaternary structure, part of a SCF E3 ubiquitin ligase complex. In terms of tissue distribution, specifically expressed in ascus mother cells.

It is found in the cytoplasm. In terms of biological role, involved in meiosis and required for ascospore formation. Involved in substrate recognition in ubiquitin-dependent degradation. The protein is SCF E3 ubiquitin ligase complex F-box protein grrA (grrA) of Emericella nidulans (strain FGSC A4 / ATCC 38163 / CBS 112.46 / NRRL 194 / M139) (Aspergillus nidulans).